The following is a 68-amino-acid chain: Peptide TsPep3 (68 aa).

A signal peptide spans 1–26 (MKLSCGFLLIFLVLSAMIATFSEVEA). Intrachain disulfides connect cysteine 30-cysteine 38, cysteine 33-cysteine 54, cysteine 37-cysteine 47, and cysteine 42-cysteine 52. Positions 56 to 68 (GRSDLNEEFENYQ) are excised as a propeptide.

In terms of tissue distribution, expressed by the venom gland.

It localises to the secreted. Probable weak potassium channel blocker. The chain is Peptide TsPep3 from Tityus serrulatus (Brazilian scorpion).